The primary structure comprises 178 residues: Redox-sensing transcriptional repressor Rex (178 aa).

59-64 (GVGNMG) provides a ligand contact to NAD(+).

It belongs to the transcriptional regulatory Rex family. Homodimer.

It localises to the cytoplasm. In terms of biological role, modulates transcription in response to changes in cellular NADH/NAD(+) redox state. The polypeptide is Redox-sensing transcriptional repressor Rex (Streptococcus suis).